The sequence spans 316 residues: tRNA methyltransferase 10 homolog B (316 aa).

2 disordered regions span residues 1–30 (MDCE…RDDG) and 42–98 (VEYD…DLGN). Residues 63-82 (VQRKQRHWERIVSSKKSKRK) show a composition bias toward basic residues. The stretch at 75–96 (SSKKSKRKQERERRKIKRAEDL) forms a coiled coil. The segment covering 83 to 95 (QERERRKIKRAED) has biased composition (basic and acidic residues). The SAM-dependent MTase TRM10-type domain maps to 113 to 310 (TKEKLLEAKH…KGVSPGKGYI (198 aa)).

The protein belongs to the class IV-like SAM-binding methyltransferase superfamily. TRM10 family.

The enzyme catalyses guanosine(9) in tRNA + S-adenosyl-L-methionine = N(1)-methylguanosine(9) in tRNA + S-adenosyl-L-homocysteine + H(+). Functionally, S-adenosyl-L-methionine-dependent guanine N(1)-methyltransferase that catalyzes the formation of N(1)-methylguanine at position 9 (m1G9) in tRNAs. Probably not able to catalyze formation of N(1)-methyladenine at position 9 (m1A9) in tRNAs. This Rattus norvegicus (Rat) protein is tRNA methyltransferase 10 homolog B (Trmt10b).